The following is a 259-amino-acid chain: Phosphatidylglycerol--prolipoprotein diacylglyceryl transferase (259 aa).

A run of 4 helical transmembrane segments spans residues I10–Y30, I50–Y70, W86–F106, and I112–G132. Position 133 (R133) interacts with a 1,2-diacyl-sn-glycero-3-phospho-(1'-sn-glycerol). The next 3 membrane-spanning stretches (helical) occupy residues L169–F189, G197–V217, and I227–I247.

This sequence belongs to the Lgt family.

It localises to the cell inner membrane. The enzyme catalyses L-cysteinyl-[prolipoprotein] + a 1,2-diacyl-sn-glycero-3-phospho-(1'-sn-glycerol) = an S-1,2-diacyl-sn-glyceryl-L-cysteinyl-[prolipoprotein] + sn-glycerol 1-phosphate + H(+). Its pathway is protein modification; lipoprotein biosynthesis (diacylglyceryl transfer). In terms of biological role, catalyzes the transfer of the diacylglyceryl group from phosphatidylglycerol to the sulfhydryl group of the N-terminal cysteine of a prolipoprotein, the first step in the formation of mature lipoproteins. The protein is Phosphatidylglycerol--prolipoprotein diacylglyceryl transferase of Ehrlichia ruminantium (strain Gardel).